The chain runs to 226 residues: Leucyl/phenylalanyl-tRNA--protein transferase (226 aa).

Belongs to the L/F-transferase family.

The protein resides in the cytoplasm. It carries out the reaction N-terminal L-lysyl-[protein] + L-leucyl-tRNA(Leu) = N-terminal L-leucyl-L-lysyl-[protein] + tRNA(Leu) + H(+). The catalysed reaction is N-terminal L-arginyl-[protein] + L-leucyl-tRNA(Leu) = N-terminal L-leucyl-L-arginyl-[protein] + tRNA(Leu) + H(+). It catalyses the reaction L-phenylalanyl-tRNA(Phe) + an N-terminal L-alpha-aminoacyl-[protein] = an N-terminal L-phenylalanyl-L-alpha-aminoacyl-[protein] + tRNA(Phe). In terms of biological role, functions in the N-end rule pathway of protein degradation where it conjugates Leu, Phe and, less efficiently, Met from aminoacyl-tRNAs to the N-termini of proteins containing an N-terminal arginine or lysine. The protein is Leucyl/phenylalanyl-tRNA--protein transferase of Pseudomonas putida (strain W619).